We begin with the raw amino-acid sequence, 346 residues long: STE20-related kinase adapter protein stlk (346 aa).

Residues 10 to 298 enclose the Protein kinase domain; that stretch reads YKLLEILKNG…ASKLMTHSFL (289 aa). ATP-binding positions include 16–24 and Lys38; that span reads LKNGMIGTV.

This sequence belongs to the protein kinase superfamily. STE Ser/Thr protein kinase family. STE20 subfamily.

This Drosophila melanogaster (Fruit fly) protein is STE20-related kinase adapter protein stlk.